Consider the following 389-residue polypeptide: NAD-dependent protein deacetylase sirtuin-2 (389 aa).

Residues 1–34 (MAEPDPSDPLETQAGKVQEAQDSDSDTEGGATGG) are disordered. Ala2 carries the N-acetylalanine modification. Residues Ser23 and Ser25 each carry the phosphoserine modification. At Thr27 the chain carries Phosphothreonine. The short motif at 41–51 (LRNLFTQTLGL) is the Nuclear export signal element. Ser53 is subject to Phosphoserine. Residues 57–338 (RLLDELTLEG…LALADLLGWK (282 aa)) enclose the Deacetylase sirtuin-type domain. NAD(+)-binding positions include 85-89 (AGIST) and 95-97 (DFR). Residue Ser100 is modified to Phosphoserine. 167–170 (QNID) serves as a coordination point for NAD(+). The active-site Proton acceptor is His187. The Zn(2+) site is built by Cys195, Cys200, Cys221, and Cys224. NAD(+) is bound by residues 262-263 (TS), 286-288 (NKE), and Cys324. Residues 350–389 (ANIDAQSGSQAPNPSTTISPGKSPPPAKEAARTKEKEEQQ) form a disordered region. Residues 353–369 (DAQSGSQAPNPSTTISP) are compositionally biased toward polar residues. 2 positions are modified to phosphoserine: Ser368 and Ser372. Residues 378-389 (EAARTKEKEEQQ) are compositionally biased toward basic and acidic residues.

This sequence belongs to the sirtuin family. Class I subfamily. As to quaternary structure, interacts with CDC20, FOXO3 and FZR1. Associates with microtubule in primary cortical mature neurons. Homotrimer. Interacts (via both phosphorylated, unphosphorylated, active or inactive forms) with HDAC6; the interaction is necessary for the complex to interact with alpha-tubulin, suggesting that these proteins belong to a large complex that deacetylates the cytoskeleton. Interacts with FOXO1; the interaction is disrupted upon serum-starvation or oxidative stress, leading to increased level of acetylated FOXO1 and induction of autophagy. Interacts with RELA; the interaction occurs in the cytoplasm and is increased in a TNF-alpha-dependent manner. Interacts with HOXA10; the interaction is direct. Interacts with YWHAB and YWHAG; the interactions occur in a AKT-dependent manner and increase SIRT2-dependent TP53 deacetylation. Interacts with MAPK1/ERK2 and MAPK3/ERK1; the interactions increase SIRT2 stability and deacetylation activity. Interacts (phosphorylated form) with KMT5A isoform 2; the interaction is direct, stimulates KMT5A-mediated methyltransferase activity on histone at 'Lys-20' (H4K20me1) and is increased in a H(2)O(2)-induced oxidative stress-dependent manner. Interacts with G6PD; the interaction is enhanced by H(2)O(2) treatment. Interacts with a G1/S-specific cyclin E-CDK2 complex. Interacts with AURKA, CDK5R1 (p35 form) and CDK5 and HIF1A. Interacts with the tRNA ligase SARS1; recruited to the VEGFA promoter via interaction with SARS1. Isoform 2 and isoform 4 associate with microtubules in primary cortical mature neurons. Interacts with BEX4; negatively regulates alpha-tubulin deacetylation by SIRT2. It depends on Zn(2+) as a cofactor. Post-translationally, phosphorylated at phosphoserine and phosphothreonine. Phosphorylated at Ser-368 by a mitotic kinase CDK1/cyclin B at the G2/M transition; phosphorylation regulates the delay in cell-cycle progression. Phosphorylated at Ser-368 by a mitotic kinase G1/S-specific cyclin E/Cdk2 complex; phosphorylation inactivates SIRT2-mediated alpha-tubulin deacetylation and thereby negatively regulates cell adhesion, cell migration and neurite outgrowth during neuronal differentiation. Phosphorylated by cyclin A/Cdk2 and p35-Cdk5 complexes and to a lesser extent by the cyclin D3/Cdk4 and cyclin B/Cdk1, in vitro. Dephosphorylated at Ser-368 by CDC14A and CDC14B around early anaphase. In terms of processing, acetylated by EP300; acetylation leads both to the decreased of SIRT2-mediated alpha-tubulin deacetylase activity and SIRT2-mediated down-regulation of TP53 transcriptional activity. Ubiquitinated. Isoform 1 is weakly expressed in the cortex at postnatal(P) days P1, P3 and P7, and increases progressively between P17 and older adult cortex. Isoform 1 is also expressed in heart, liver and skeletal muscle, weakly expressed in the striatum and spinal cord. Isoform 2 is not expressed in the cortex at P1, P3 and P7, and increases strongly and progressively between P17 and older adult cortex. Isoform 2 is also expressed in the heart, liver, striatum and spinal cord. Isoform 4 is weakly expressed in older adult cortex and spinal cords. Expressed in the cortex. Expressed in postnatal sciatic nerves during myelination and during remyelination after nerve injury. Expressed in neurons, oligodendrocytes, Schwann cells, Purkinje cells and in astrocytes of white matter. Strongly expressed in preadipocytes compared with differentiated adipocytes. Expressed in cerebellar granule cells. Expressed in the inner ear: in the cochlea, expressed in types I and V fibrocytes in the spiral ligament (SL) and slightly in stria vascularis (SV); in the organ of Corti, expressed in some supporting cells; in the crista ampullaris, expressed in spiral ganglion cells; also expressed in the endolymphatic sac (ES) epithelial cells (at protein level). Expressed in the brain, spinal cord, optic nerve and hippocampus. Strongly expressed in 6-8 week-old ovulated meiosis II oocytes and weakly expressed in 45-58 week-old ovulated meiosis II oocytes. Expressed in the cochlea, vestibule and acoustic nerve of the inner ear.

It localises to the nucleus. The protein resides in the cytoplasm. The protein localises to the perinuclear region. Its subcellular location is the perikaryon. It is found in the cytoskeleton. It localises to the cell projection. The protein resides in the growth cone. The protein localises to the myelin membrane. Its subcellular location is the microtubule organizing center. It is found in the centrosome. It localises to the spindle. The protein resides in the chromosome. The protein localises to the midbody. Its subcellular location is the centriole. The enzyme catalyses N(6)-acetyl-L-lysyl-[protein] + NAD(+) + H2O = 2''-O-acetyl-ADP-D-ribose + nicotinamide + L-lysyl-[protein]. It carries out the reaction N(6)-tetradecanoyl-L-lysyl-[protein] + NAD(+) + H2O = 2''-O-tetradecanoyl-ADP-D-ribose + nicotinamide + L-lysyl-[protein]. It catalyses the reaction N(6)-hexadecanoyl-L-lysyl-[protein] + NAD(+) + H2O = 2''-O-hexadecanoyl-ADP-D-ribose + nicotinamide + L-lysyl-[protein]. Its activity is regulated as follows. Inhibited by Sirtinol, A3 and M15 small molecules. Inhibited by nicotinamide. Inhibited by a macrocyclic peptide inhibitor S2iL5. Inhibited by EP300-induced acetylation. NAD-dependent protein deacetylase, which deacetylates internal lysines on histone and alpha-tubulin as well as many other proteins such as key transcription factors. Participates in the modulation of multiple and diverse biological processes such as cell cycle control, genomic integrity, microtubule dynamics, cell differentiation, metabolic networks, and autophagy. Plays a major role in the control of cell cycle progression and genomic stability. Functions in the antephase checkpoint preventing precocious mitotic entry in response to microtubule stress agents, and hence allowing proper inheritance of chromosomes. Positively regulates the anaphase promoting complex/cyclosome (APC/C) ubiquitin ligase complex activity by deacetylating CDC20 and FZR1, then allowing progression through mitosis. Associates both with chromatin at transcriptional start sites (TSSs) and enhancers of active genes. Plays a role in cell cycle and chromatin compaction through epigenetic modulation of the regulation of histone H4 'Lys-20' methylation (H4K20me1) during early mitosis. Specifically deacetylates histone H4 at 'Lys-16' (H4K16ac) between the G2/M transition and metaphase enabling H4K20me1 deposition by KMT5A leading to ulterior levels of H4K20me2 and H4K20me3 deposition throughout cell cycle, and mitotic S-phase progression. Deacetylates KMT5A modulating KMT5A chromatin localization during the mitotic stress response. Also deacetylates histone H3 at 'Lys-57' (H3K56ac) during the mitotic G2/M transition. During oocyte meiosis progression, may deacetylate histone H4 at 'Lys-16' (H4K16ac) and alpha-tubulin, regulating spindle assembly and chromosome alignment by influencing microtubule dynamics and kinetochore function. Deacetylates histone H4 at 'Lys-16' (H4K16ac) at the VEGFA promoter and thereby contributes to regulate expression of VEGFA, a key regulator of angiogenesis. Deacetylates alpha-tubulin at 'Lys-40' and hence controls neuronal motility, oligodendroglial cell arbor projection processes and proliferation of non-neuronal cells. Phosphorylation at Ser-368 by a G1/S-specific cyclin E-CDK2 complex inactivates SIRT2-mediated alpha-tubulin deacetylation, negatively regulating cell adhesion, cell migration and neurite outgrowth during neuronal differentiation. Deacetylates PARD3 and participates in the regulation of Schwann cell peripheral myelination formation during early postnatal development and during postinjury remyelination. Involved in several cellular metabolic pathways. Plays a role in the regulation of blood glucose homeostasis by deacetylating and stabilizing phosphoenolpyruvate carboxykinase PCK1 activity in response to low nutrient availability. Acts as a key regulator in the pentose phosphate pathway (PPP) by deacetylating and activating the glucose-6-phosphate G6PD enzyme, and therefore, stimulates the production of cytosolic NADPH to counteract oxidative damage. Maintains energy homeostasis in response to nutrient deprivation as well as energy expenditure by inhibiting adipogenesis and promoting lipolysis. Attenuates adipocyte differentiation by deacetylating and promoting FOXO1 interaction to PPARG and subsequent repression of PPARG-dependent transcriptional activity. Plays a role in the regulation of lysosome-mediated degradation of protein aggregates by autophagy in neuronal cells. Deacetylates FOXO1 in response to oxidative stress or serum deprivation, thereby negatively regulating FOXO1-mediated autophagy. Deacetylates a broad range of transcription factors and co-regulators regulating target gene expression. Deacetylates transcriptional factor FOXO3 stimulating the ubiquitin ligase SCF(SKP2)-mediated FOXO3 ubiquitination and degradation. Deacetylates HIF1A and therefore promotes HIF1A degradation and inhibition of HIF1A transcriptional activity in tumor cells in response to hypoxia. Deacetylates RELA in the cytoplasm inhibiting NF-kappaB-dependent transcription activation upon TNF-alpha stimulation. Inhibits transcriptional activation by deacetylating p53/TP53 and EP300. Also deacetylates EIF5A. Functions as a negative regulator on oxidative stress-tolerance in response to anoxia-reoxygenation conditions. Plays a role as tumor suppressor. In addition to protein deacetylase activity, also has activity toward long-chain fatty acyl groups and mediates protein-lysine demyristoylation and depalmitoylation of target proteins, such as ARF6 and KRAS, thereby regulating their association with membranes. Functionally, deacetylates alpha-tubulin. In Mus musculus (Mouse), this protein is NAD-dependent protein deacetylase sirtuin-2 (Sirt2).